A 453-amino-acid chain; its full sequence is Ribulose bisphosphate carboxylase large chain (453 aa).

Residues 1–2 (MS) constitute a propeptide that is removed on maturation. Position 3 is an N-acetylproline (Pro3). Lys14 carries the N6,N6,N6-trimethyllysine modification. Substrate contacts are provided by Asn123 and Thr173. Residue Lys175 is the Proton acceptor of the active site. Lys177 is a binding site for substrate. Residues Lys201, Asp203, and Glu204 each coordinate Mg(2+). An N6-carboxylysine modification is found at Lys201. His294 (proton acceptor) is an active-site residue. Arg295, His327, and Ser379 together coordinate substrate.

This sequence belongs to the RuBisCO large chain family. Type I subfamily. In terms of assembly, heterohexadecamer of 8 large chains and 8 small chains; disulfide-linked. The disulfide link is formed within the large subunit homodimers. It depends on Mg(2+) as a cofactor. The disulfide bond which can form in the large chain dimeric partners within the hexadecamer appears to be associated with oxidative stress and protein turnover.

Its subcellular location is the plastid. The protein localises to the chloroplast. The enzyme catalyses 2 (2R)-3-phosphoglycerate + 2 H(+) = D-ribulose 1,5-bisphosphate + CO2 + H2O. It carries out the reaction D-ribulose 1,5-bisphosphate + O2 = 2-phosphoglycolate + (2R)-3-phosphoglycerate + 2 H(+). Its function is as follows. RuBisCO catalyzes two reactions: the carboxylation of D-ribulose 1,5-bisphosphate, the primary event in carbon dioxide fixation, as well as the oxidative fragmentation of the pentose substrate in the photorespiration process. Both reactions occur simultaneously and in competition at the same active site. In Galium album (White bedstraw), this protein is Ribulose bisphosphate carboxylase large chain.